A 247-amino-acid polypeptide reads, in one-letter code: LHFPL tetraspan subfamily member 4 protein (247 aa).

A run of 4 helical transmembrane segments spans residues 22-42 (IGVL…VVFI), 97-117 (FFVL…ALFF), 127-147 (ICAW…MIFP), and 178-198 (ILAI…FVLG).

It belongs to the LHFP family. As to quaternary structure, interacts with GABA(A) receptor subunits. Interacts with GABRB3. Interacts with GABRA2. Interacts with GABRG2. Interacts with GABRA1. Identified in a complex of 720 kDa composed of LHFPL4, NLGN2, GABRA1, GABRB2, GABRG2 and GABRB3. Interacts with NLGN2; leading to mutual regulation of protein level and synaptic clustering. Highly expressed in the brain, including the cortex, hippocampus, midbrain, olfactory bulb pona plus medulla (at protein level). Expressed in the in the cerebellar granular layer and in granular layer. Colocalized with GPHN at inhibitory synapses. Weakly expressed in heart, testis, lung, intestine, vagina, ovary and uterus.

Its subcellular location is the cell projection. The protein localises to the dendrite. It localises to the postsynaptic cell membrane. Its function is as follows. Plays a role in the regulation of inhibitory synapse formation and function by being involved in maintening gamma-aminobutyric acid receptors (GABAARs) clustering and their associated scaffold proteins at inhibitory synaptic sites. Acts in concert with NLGN2 to recruit or stabilize GABAARs. In Mus musculus (Mouse), this protein is LHFPL tetraspan subfamily member 4 protein.